The following is a 365-amino-acid chain: tRNA/tmRNA (uracil-C(5))-methyltransferase (365 aa).

Residues Gln189, Tyr217, Asn222, Glu238, and Asp298 each contribute to the S-adenosyl-L-methionine site. Residue Cys323 is the Nucleophile of the active site. The active-site Proton acceptor is Glu357.

This sequence belongs to the class I-like SAM-binding methyltransferase superfamily. RNA M5U methyltransferase family. TrmA subfamily.

It catalyses the reaction uridine(54) in tRNA + S-adenosyl-L-methionine = 5-methyluridine(54) in tRNA + S-adenosyl-L-homocysteine + H(+). The catalysed reaction is uridine(341) in tmRNA + S-adenosyl-L-methionine = 5-methyluridine(341) in tmRNA + S-adenosyl-L-homocysteine + H(+). Dual-specificity methyltransferase that catalyzes the formation of 5-methyluridine at position 54 (m5U54) in all tRNAs, and that of position 341 (m5U341) in tmRNA (transfer-mRNA). This is tRNA/tmRNA (uracil-C(5))-methyltransferase from Shewanella pealeana (strain ATCC 700345 / ANG-SQ1).